A 297-amino-acid polypeptide reads, in one-letter code: Nucleotide-binding protein Bphy_0322 (297 aa).

ATP is bound at residue 8–15 (GISGSGKS). 57–60 (DARS) lines the GTP pocket.

Belongs to the RapZ-like family.

Displays ATPase and GTPase activities. This chain is Nucleotide-binding protein Bphy_0322, found in Paraburkholderia phymatum (strain DSM 17167 / CIP 108236 / LMG 21445 / STM815) (Burkholderia phymatum).